The primary structure comprises 329 residues: Glycerol-3-phosphate dehydrogenase [NAD(P)+] (329 aa).

The NADPH site is built by Ser13, Trp14, His34, and Lys105. 3 residues coordinate sn-glycerol 3-phosphate: Lys105, Gly134, and Ser136. An NADPH-binding site is contributed by Ala138. Sn-glycerol 3-phosphate-binding residues include Lys189, Asp242, Ser252, Arg253, and Asn254. Lys189 (proton acceptor) is an active-site residue. Residue Arg253 coordinates NADPH. NADPH-binding residues include Val277 and Glu279.

The protein belongs to the NAD-dependent glycerol-3-phosphate dehydrogenase family.

The protein resides in the cytoplasm. The enzyme catalyses sn-glycerol 3-phosphate + NAD(+) = dihydroxyacetone phosphate + NADH + H(+). It carries out the reaction sn-glycerol 3-phosphate + NADP(+) = dihydroxyacetone phosphate + NADPH + H(+). It participates in membrane lipid metabolism; glycerophospholipid metabolism. Catalyzes the reduction of the glycolytic intermediate dihydroxyacetone phosphate (DHAP) to sn-glycerol 3-phosphate (G3P), the key precursor for phospholipid synthesis. This is Glycerol-3-phosphate dehydrogenase [NAD(P)+] from Legionella pneumophila (strain Paris).